The sequence spans 235 residues: MPEKLAKAIANPLFPALDNALRSGRHVSSEDLDNHALLIEFERELGMFYRRYNTELIRAPEGFFYLRPRSTSLIGRSVLSEIDMLVGKVLCFLYLSPERLAHEGIFTNQELFDELLVLADEKKLMKFVTHRASGSDLDREKLYDKVKTSLRRLRRIGMLIPIGENGKFRISESVFRFGADVRTGDDVREAQLRLIRDGEAVVHQQEPSQSSLLDGFDADDTGHHDSELTMQEGEV.

The segment at 204-235 is disordered; the sequence is QQEPSQSSLLDGFDADDTGHHDSELTMQEGEV.

The protein belongs to the MukE family. Interacts, and probably forms a ternary complex, with MukF and MukB. The complex formation is stimulated by calcium or magnesium.

Its subcellular location is the cytoplasm. It localises to the nucleoid. Its function is as follows. Involved in chromosome condensation, segregation and cell cycle progression. May participate in facilitating chromosome segregation by condensation DNA from both sides of a centrally located replisome during cell division. Probably acts via its interaction with MukB and MukF. In Photobacterium profundum (strain SS9), this protein is Chromosome partition protein MukE.